Consider the following 417-residue polypeptide: MLKKDMNIADYDPELFNAIQNETLRQEEHIELIASENYTSPRVMEAQGSQLTNKYAEGYPGKRYYGGCEYVDVVETLAIERAKELFGATYANVQPHSGSQANSAVYMALLKPGDTVLGMNLAHGGHLTHGSPVNFSGKLYNIIPYGIDESGKIDYDEMERLAVEHKPKMMIGGFSAYSGIVDWAKMREIADKIGAYLFVDMAHVAGLIAAGVYPNPVPHAHVVTSTTHKTLAGPRGGVILSAADDEDLYKKLNSAVFPGGQGGPLMHVIAGKAVAFKEALEPEFKVYQQQVVNNAKAMVEVFLERGYKIVSGGTSNHLMLVDLIGRDLTGKEADAALGSANITVNKNSVPNDPRSPFVTSGVRIGTPAITRRGFKEAESKELTGWICDILDDASNPAVIERVKGQVLALCARFPVYG.

(6S)-5,6,7,8-tetrahydrofolate is bound by residues L121 and G125–L127. K229 is modified (N6-(pyridoxal phosphate)lysine). Residue S355–F357 participates in (6S)-5,6,7,8-tetrahydrofolate binding.

Belongs to the SHMT family. Homodimer. Requires pyridoxal 5'-phosphate as cofactor.

The protein localises to the cytoplasm. The enzyme catalyses (6R)-5,10-methylene-5,6,7,8-tetrahydrofolate + glycine + H2O = (6S)-5,6,7,8-tetrahydrofolate + L-serine. The protein operates within one-carbon metabolism; tetrahydrofolate interconversion. It participates in amino-acid biosynthesis; glycine biosynthesis; glycine from L-serine: step 1/1. Catalyzes the reversible interconversion of serine and glycine with tetrahydrofolate (THF) serving as the one-carbon carrier. This reaction serves as the major source of one-carbon groups required for the biosynthesis of purines, thymidylate, methionine, and other important biomolecules. Also exhibits THF-independent aldolase activity toward beta-hydroxyamino acids, producing glycine and aldehydes, via a retro-aldol mechanism. The polypeptide is Serine hydroxymethyltransferase (Shewanella baltica (strain OS223)).